The chain runs to 200 residues: Thymidylate kinase (200 aa).

An ATP-binding site is contributed by 10 to 17 (GIDGAGKS).

The protein belongs to the thymidylate kinase family.

The catalysed reaction is dTMP + ATP = dTDP + ADP. In terms of biological role, phosphorylation of dTMP to form dTDP in both de novo and salvage pathways of dTTP synthesis. The polypeptide is Thymidylate kinase (Cupriavidus metallidurans (strain ATCC 43123 / DSM 2839 / NBRC 102507 / CH34) (Ralstonia metallidurans)).